A 252-amino-acid chain; its full sequence is Probable transcriptional regulatory protein Ava_1228 (252 aa).

Belongs to the TACO1 family.

Its subcellular location is the cytoplasm. In Trichormus variabilis (strain ATCC 29413 / PCC 7937) (Anabaena variabilis), this protein is Probable transcriptional regulatory protein Ava_1228.